The chain runs to 338 residues: ABC transporter I family member 6, chloroplastic (338 aa).

The transit peptide at 1 to 66 (MAGVNLQLRH…RTTRRSVIVS (66 aa)) directs the protein to the chloroplast. Residues 92-338 (LEVRDLRAVI…EKEGYKAISG (247 aa)) form the ABC transporter domain. Residue 126–133 (GKNGSGKS) coordinates ATP.

Belongs to the ABC transporter superfamily. ABCI family. In terms of assembly, interacts with NAP6. Present in all organs, with higher levels in aerial parts.

It is found in the plastid. The protein resides in the chloroplast. Its function is as follows. Essential protein. Required during embryo development, especially at early stages. Involved in chloroplast differentiation. The chain is ABC transporter I family member 6, chloroplastic (ABCI6) from Arabidopsis thaliana (Mouse-ear cress).